The chain runs to 375 residues: Delta(9) fatty acid conjugase-like enzyme (375 aa).

Transmembrane regions (helical) follow at residues 38-58 (LSLS…LFYV) and 66-86 (LPYS…GAFL). Residues 94-98 (HECGH) carry the Histidine box-1 motif. A Histidine box-2 motif is present at residues 130–134 (HRNHH). The next 3 membrane-spanning stretches (helical) occupy residues 168–188 (FGLV…YLIF), 219–239 (VFFS…IAIA), and 241–261 (GAML…AFIF). The short motif at 307–311 (HVVHH) is the Histidine box-3 element.

It belongs to the fatty acid desaturase type 1 family.

It localises to the membrane. Functionally, involved in the biosynthesis of dimorphecolic acid (9-OH-18:2(10E,12E)). Catalyzes the formation of the C-9 hydroxyl group and the (E)-delta(10) double bond from the trans-linoleic acid (16:2(9Z,12E)) produced by FAD2-1. Very limited activity with cis-linoleic acid (16:2(9Z,12Z)). The protein is Delta(9) fatty acid conjugase-like enzyme of Dimorphotheca sinuata (African daisy).